The chain runs to 337 residues: Holliday junction branch migration complex subunit RuvB (337 aa).

The tract at residues 4-184 is large ATPase domain (RuvB-L); that stretch reads ADRLIEPIAS…FGIVQRLEFY (181 aa). ATP is bound by residues isoleucine 23, arginine 24, glycine 65, lysine 68, threonine 69, threonine 70, 131-133, arginine 174, tyrosine 184, and arginine 221; that span reads EDY. Threonine 69 contributes to the Mg(2+) binding site. Residues 185 to 255 are small ATPAse domain (RuvB-S); that stretch reads NVADLSTIVS…TAAAALDMLE (71 aa). The segment at 258 to 337 is head domain (RuvB-H); it reads SEGFDIMDRK…FGITKDQTKD (80 aa). The DNA site is built by arginine 294, arginine 313, and arginine 318.

The protein belongs to the RuvB family. Homohexamer. Forms an RuvA(8)-RuvB(12)-Holliday junction (HJ) complex. HJ DNA is sandwiched between 2 RuvA tetramers; dsDNA enters through RuvA and exits via RuvB. An RuvB hexamer assembles on each DNA strand where it exits the tetramer. Each RuvB hexamer is contacted by two RuvA subunits (via domain III) on 2 adjacent RuvB subunits; this complex drives branch migration. In the full resolvosome a probable DNA-RuvA(4)-RuvB(12)-RuvC(2) complex forms which resolves the HJ.

The protein resides in the cytoplasm. The catalysed reaction is ATP + H2O = ADP + phosphate + H(+). Functionally, the RuvA-RuvB-RuvC complex processes Holliday junction (HJ) DNA during genetic recombination and DNA repair, while the RuvA-RuvB complex plays an important role in the rescue of blocked DNA replication forks via replication fork reversal (RFR). RuvA specifically binds to HJ cruciform DNA, conferring on it an open structure. The RuvB hexamer acts as an ATP-dependent pump, pulling dsDNA into and through the RuvAB complex. RuvB forms 2 homohexamers on either side of HJ DNA bound by 1 or 2 RuvA tetramers; 4 subunits per hexamer contact DNA at a time. Coordinated motions by a converter formed by DNA-disengaged RuvB subunits stimulates ATP hydrolysis and nucleotide exchange. Immobilization of the converter enables RuvB to convert the ATP-contained energy into a lever motion, pulling 2 nucleotides of DNA out of the RuvA tetramer per ATP hydrolyzed, thus driving DNA branch migration. The RuvB motors rotate together with the DNA substrate, which together with the progressing nucleotide cycle form the mechanistic basis for DNA recombination by continuous HJ branch migration. Branch migration allows RuvC to scan DNA until it finds its consensus sequence, where it cleaves and resolves cruciform DNA. This is Holliday junction branch migration complex subunit RuvB from Colwellia psychrerythraea (strain 34H / ATCC BAA-681) (Vibrio psychroerythus).